A 293-amino-acid polypeptide reads, in one-letter code: Signal recognition particle receptor FtsY (293 aa).

Residues 93–100 (GVNGAGKT), 175–179 (DTAGR), and 239–242 (TKLD) contribute to the GTP site.

The protein belongs to the GTP-binding SRP family. FtsY subfamily. Part of the signal recognition particle protein translocation system, which is composed of SRP and FtsY. SRP is a ribonucleoprotein composed of Ffh and a 4.5S RNA molecule.

It localises to the cell inner membrane. It is found in the cytoplasm. The enzyme catalyses GTP + H2O = GDP + phosphate + H(+). In terms of biological role, involved in targeting and insertion of nascent membrane proteins into the cytoplasmic membrane. Acts as a receptor for the complex formed by the signal recognition particle (SRP) and the ribosome-nascent chain (RNC). Interaction with SRP-RNC leads to the transfer of the RNC complex to the Sec translocase for insertion into the membrane, the hydrolysis of GTP by both Ffh and FtsY, and the dissociation of the SRP-FtsY complex into the individual components. In Helicobacter pylori (strain ATCC 700392 / 26695) (Campylobacter pylori), this protein is Signal recognition particle receptor FtsY.